The sequence spans 159 residues: NADH-quinone oxidoreductase subunit I (159 aa).

2 consecutive 4Fe-4S ferredoxin-type domains span residues 51-80 and 90-119; these read RRYENGEERCIACKLCEAICPAQAIVIESD and TRYDIDMTKCIYCGLCQEACPVDAIVEGPN. [4Fe-4S] cluster is bound by residues Cys60, Cys63, Cys66, Cys70, Cys99, Cys102, Cys105, and Cys109.

It belongs to the complex I 23 kDa subunit family. As to quaternary structure, NDH-1 is composed of 14 different subunits. Subunits NuoA, H, J, K, L, M, N constitute the membrane sector of the complex. It depends on [4Fe-4S] cluster as a cofactor.

It localises to the cell inner membrane. It catalyses the reaction a quinone + NADH + 5 H(+)(in) = a quinol + NAD(+) + 4 H(+)(out). Its function is as follows. NDH-1 shuttles electrons from NADH, via FMN and iron-sulfur (Fe-S) centers, to quinones in the respiratory chain. The immediate electron acceptor for the enzyme in this species is believed to be ubiquinone. Couples the redox reaction to proton translocation (for every two electrons transferred, four hydrogen ions are translocated across the cytoplasmic membrane), and thus conserves the redox energy in a proton gradient. The protein is NADH-quinone oxidoreductase subunit I of Rickettsia prowazekii (strain Madrid E).